Here is a 537-residue protein sequence, read N- to C-terminus: MPAITCVWSDGRSDTWPNVNGHSRTRSVPSLKPLPHQDSKNLLYRQICGRLLAQHVFGGAGSTQPILNQLCKRLSTGNPNNTNASTVVTAPEKNVVSARHVRPNPKSSKDTLEKQPKYSSQIYLTDSFENYYLASLPTNYQLYQRDSNRENGNGKREFWLYGHPSGRPFRSVNDFLHHLYWLISDLTRNESTCCCVLCSGNMTRVRKNLQKENERMFHECKDDTYTWPSSYRLGEVVWIDINNELIPAIIVARNLINYESNQMDAVKLISDTFVEPYQYHCKQLGNSRYYFDMAAADIEPWSRHPLDLQKQEHLVAHSICQTWNLFGIFQPLEGIDMEEPKFHDENYSIPLTVLPTFGGESNSLDDHFYGIFRGAEKLWINDLCVISTSSLPSVLQKTSFMYISDIYVNEDDIVCFQGSLWTQIDKNALDYNDSADNIDEHKDDLKELPRRLQMVSKLSNTYFRCLHDKSVEYVCPFADVLGRWYEPWFVKGDLNYTSEVKERTSSRLSAVGSENWVDDDFYEYLLSEIDMVSAVVM.

Residues 96–116 (VSARHVRPNPKSSKDTLEKQP) are disordered. A compositionally biased stretch (basic and acidic residues) spans 107–116 (SSKDTLEKQP).

In terms of assembly, interacts with clr3.

It is found in the nucleus. Its subcellular location is the chromosome. It localises to the centromere. The protein localises to the telomere. In terms of biological role, required for deacetylation in the mating-type region and the centromere. Acts upstream of the histone deacetylases to promote transcriptional silencing. Required for proper positioning of nucleosomes at heterochromatic loci and for transcriptional gene silencing (TGS) function of the Snf2/Hdac-containing repressor complex (SHREC). The protein is Cryptic loci regulator 2 (clr2) of Schizosaccharomyces pombe (strain 972 / ATCC 24843) (Fission yeast).